A 182-amino-acid polypeptide reads, in one-letter code: Translation initiation factor IF-3 (182 aa).

This sequence belongs to the IF-3 family. Monomer.

The protein localises to the cytoplasm. Functionally, IF-3 binds to the 30S ribosomal subunit and shifts the equilibrium between 70S ribosomes and their 50S and 30S subunits in favor of the free subunits, thus enhancing the availability of 30S subunits on which protein synthesis initiation begins. The polypeptide is Translation initiation factor IF-3 (Tropheryma whipplei (strain TW08/27) (Whipple's bacillus)).